Consider the following 315-residue polypeptide: Olfactory receptor 3A1 (315 aa).

Over 1 to 28 the chain is Extracellular; it reads MQPESGANGTVIAEFILLGLLEAPGLQP. Asparagine 8 carries N-linked (GlcNAc...) asparagine glycosylation. Residues 29 to 52 traverse the membrane as a helical segment; the sequence is VVFVLFLFAYLVTVRGNLSILAAV. Over 53-60 the chain is Cytoplasmic; the sequence is LVEPKLHT. Residues 61 to 82 form a helical membrane-spanning segment; sequence PMYFFLGNLSVLDVGCISVTVP. Residues 83-103 are Extracellular-facing; the sequence is SMLSRLLSRKRAVPCGACLTQ. An intrachain disulfide couples cysteine 100 to cysteine 192. A helical transmembrane segment spans residues 104–123; it reads LFFFHLFVGVDCFLLTAMAY. Over 124–143 the chain is Cytoplasmic; it reads DRFLAICRPLTYSTRMSQTV. The chain crosses the membrane as a helical span at residues 144 to 161; the sequence is QRMLVAASWACAFTNALT. Topologically, residues 162 to 199 are extracellular; sequence HTVAMSTLNFCGPNVINHFYCDLPQLFQLSCSSTQLNE. The helical transmembrane segment at 200-223 threads the bilayer; it reads LLLFAVGFIMAGTPMALIVISYIH. Residues 224-240 are Cytoplasmic-facing; sequence VAAAVLRIRSVEGRKKA. The helical transmembrane segment at 241 to 264 threads the bilayer; sequence FSTCGSHLTVVAIFYGSGIFNYMR. Over 265-275 the chain is Extracellular; it reads LGSTKLSDKDK. Residues 276–295 form a helical membrane-spanning segment; sequence AVGIFNTVINPMLNPIIYSF. The Cytoplasmic portion of the chain corresponds to 296–315; the sequence is RNPDVQSAIWRMLTGRRSLA.

This sequence belongs to the G-protein coupled receptor 1 family.

The protein resides in the cell membrane. Odorant receptor. The sequence is that of Olfactory receptor 3A1 (OR3A1) from Homo sapiens (Human).